The chain runs to 400 residues: Probable glucan endo-1,6-beta-glucosidase B (400 aa).

Residues 1 to 17 (MIRRLAALSALSGLATA) form the signal peptide. Asn-30 is a glycosylation site (N-linked (GlcNAc...) asparagine). Residue Glu-219 is the Proton donor of the active site. A glycan (N-linked (GlcNAc...) asparagine) is linked at Asn-272. The Nucleophile role is filled by Glu-320.

It belongs to the glycosyl hydrolase 5 (cellulase A) family.

It is found in the secreted. It catalyses the reaction Random hydrolysis of (1-&gt;6)-linkages in (1-&gt;6)-beta-D-glucans.. Its function is as follows. Beta-glucanases participate in the metabolism of beta-glucan, the main structural component of the cell wall. Acts on lutean, pustulan and 1,6-oligo-beta-D-glucosides. This Neosartorya fischeri (strain ATCC 1020 / DSM 3700 / CBS 544.65 / FGSC A1164 / JCM 1740 / NRRL 181 / WB 181) (Aspergillus fischerianus) protein is Probable glucan endo-1,6-beta-glucosidase B (exgB).